Consider the following 131-residue polypeptide: Small ribosomal subunit protein uS8 (131 aa).

Belongs to the universal ribosomal protein uS8 family. As to quaternary structure, part of the 30S ribosomal subunit. Contacts proteins S5 and S12.

Functionally, one of the primary rRNA binding proteins, it binds directly to 16S rRNA central domain where it helps coordinate assembly of the platform of the 30S subunit. This Pelodictyon phaeoclathratiforme (strain DSM 5477 / BU-1) protein is Small ribosomal subunit protein uS8.